Consider the following 83-residue polypeptide: Toxin TdNa3 (83 aa).

A signal peptide spans 1–20 (MKGMIMLISCLMLIDVVVES). One can recognise an LCN-type CS-alpha/beta domain in the interval 21–82 (KNGYIIEPKG…IFDYYNNKCG (62 aa)). 4 disulfide bridges follow: Cys-31-Cys-81, Cys-35-Cys-57, Cys-43-Cys-62, and Cys-47-Cys-64. A Cysteine amide modification is found at Cys-81.

The protein belongs to the long (4 C-C) scorpion toxin superfamily. Sodium channel inhibitor family. Beta subfamily. Expressed by the venom gland.

It is found in the secreted. In terms of biological role, inhibits the sodium currents (Nav) in an apparent irreversible manner. Produces small depolarization and induces repetitive firing in squid axons. Is specific for arthropods (crickets, triatomides, crabs and squids), but is non-toxic to mice. In Tityus discrepans (Venezuelan scorpion), this protein is Toxin TdNa3.